The following is a 165-amino-acid chain: V-type proton ATPase 16 kDa proteolipid subunit (165 aa).

Residues 1 to 10 (MSSTFSGDET) lie on the Lumenal side of the membrane. A helical transmembrane segment spans residues 11–33 (APFFGFLGAAAALVFSCMGAAYG). Over 34-55 (TAKSGVGVASMGVMRPELVMKS) the chain is Cytoplasmic. The chain crosses the membrane as a helical span at residues 56–76 (IVPVVMAGVLGIYGLIIAVII). At 77–95 (STGINPKAKSYYLFDGYAH) the chain is on the lumenal side. A helical transmembrane segment spans residues 96 to 117 (LSSGLACGLAGLSAGMAIGIVG). The Cytoplasmic segment spans residues 118-129 (DAGVRANAQQPK). A helical transmembrane segment spans residues 130–155 (LFVGMILILIFAEALALYGLIVGIIL). Over 156–165 (SSRAGQSRAE) the chain is Lumenal.

This sequence belongs to the V-ATPase proteolipid subunit family. As to quaternary structure, V-ATPase is a heteromultimeric enzyme composed of a peripheral catalytic V1 complex (main components: subunits A, B, C, D, E, and F) attached to an integral membrane V0 proton pore complex (main component: the proteolipid protein; which is present as a hexamer that forms the proton-conducting pore).

Its subcellular location is the vacuole membrane. Functionally, proton-conducting pore forming subunit of the membrane integral V0 complex of vacuolar ATPase. V-ATPase is responsible for acidifying a variety of intracellular compartments in eukaryotic cells. The sequence is that of V-type proton ATPase 16 kDa proteolipid subunit (CVA16-2) from Gossypium hirsutum (Upland cotton).